Reading from the N-terminus, the 395-residue chain is MKKYNRIFVIVLDSLGIGAMPDSERFGDTDVDTFGHILERMQTLDIPNLTRLGMLNLHCGGQMQPAAEPIGRFTRLAEASNGKDTMTGHWEMMGIKTEKPFKTFTEHGFPPELIAELEKQCGKKVIGNKSASGTEIIEELGEEEIKNGSMIVYTSADSVLQICGNEETFDLQNLYRCCEIARKITLKDEWRVGRVIARPYVGKKKGEFVRTSNRHDYALKPTGLTALNALKDSGLDVISVGKINDIFCGEGITEAFRSKSSVHGMEQTIDICEKDFTGLCFVNLVDFDALWGHRRNVTGYGEEIEKFDKNLGILMEKLRDDDLLILTADHGNDPTYKGTDHTREYVPFIAYSKSMKGGGAIEEEATFAVIGATITDNFGVKMPEGTIGHSILEEL.

Mn(2+) contacts are provided by aspartate 13, aspartate 288, histidine 293, aspartate 329, histidine 330, and histidine 341.

It belongs to the phosphopentomutase family. The cofactor is Mn(2+).

It localises to the cytoplasm. The catalysed reaction is 2-deoxy-alpha-D-ribose 1-phosphate = 2-deoxy-D-ribose 5-phosphate. The enzyme catalyses alpha-D-ribose 1-phosphate = D-ribose 5-phosphate. It functions in the pathway carbohydrate degradation; 2-deoxy-D-ribose 1-phosphate degradation; D-glyceraldehyde 3-phosphate and acetaldehyde from 2-deoxy-alpha-D-ribose 1-phosphate: step 1/2. Functionally, isomerase that catalyzes the conversion of deoxy-ribose 1-phosphate (dRib-1-P) and ribose 1-phosphate (Rib-1-P) to deoxy-ribose 5-phosphate (dRib-5-P) and ribose 5-phosphate (Rib-5-P), respectively. The protein is Phosphopentomutase of Agathobacter rectalis (strain ATCC 33656 / DSM 3377 / JCM 17463 / KCTC 5835 / VPI 0990) (Eubacterium rectale).